We begin with the raw amino-acid sequence, 120 residues long: NAD(P)H-quinone oxidoreductase subunit 3 (120 aa).

Helical transmembrane passes span 6–26 (GYDA…LALI), 64–84 (MFAL…PWAV), and 89–109 (LGVL…VALA).

It belongs to the complex I subunit 3 family. As to quaternary structure, NDH-1 can be composed of about 15 different subunits; different subcomplexes with different compositions have been identified which probably have different functions.

Its subcellular location is the cellular thylakoid membrane. It catalyses the reaction a plastoquinone + NADH + (n+1) H(+)(in) = a plastoquinol + NAD(+) + n H(+)(out). The enzyme catalyses a plastoquinone + NADPH + (n+1) H(+)(in) = a plastoquinol + NADP(+) + n H(+)(out). NDH-1 shuttles electrons from an unknown electron donor, via FMN and iron-sulfur (Fe-S) centers, to quinones in the respiratory and/or the photosynthetic chain. The immediate electron acceptor for the enzyme in this species is believed to be plastoquinone. Couples the redox reaction to proton translocation, and thus conserves the redox energy in a proton gradient. Cyanobacterial NDH-1 also plays a role in inorganic carbon-concentration. This is NAD(P)H-quinone oxidoreductase subunit 3 from Parasynechococcus marenigrum (strain WH8102).